The primary structure comprises 137 residues: Large ribosomal subunit protein uL16 (137 aa).

The protein belongs to the universal ribosomal protein uL16 family. As to quaternary structure, part of the 50S ribosomal subunit.

Its function is as follows. Binds 23S rRNA and is also seen to make contacts with the A and possibly P site tRNAs. In Xanthomonas campestris pv. campestris (strain 8004), this protein is Large ribosomal subunit protein uL16.